The following is a 724-amino-acid chain: Probable protein phosphatase 2C 62 (724 aa).

Positions 357–385 (DELISTSEATRHSVDEIAQKPIIDTSEKN) are disordered. Residues 365–374 (ATRHSVDEIA) show a composition bias toward basic and acidic residues. The PPM-type phosphatase domain maps to 482–719 (DSGFASLQSP…DAVTVIISFV (238 aa)). Mn(2+) is bound by residues Asp-514, Gly-515, Asp-643, and Asp-710.

It belongs to the PP2C family. Requires Mg(2+) as cofactor. Mn(2+) serves as cofactor.

The enzyme catalyses O-phospho-L-seryl-[protein] + H2O = L-seryl-[protein] + phosphate. The catalysed reaction is O-phospho-L-threonyl-[protein] + H2O = L-threonyl-[protein] + phosphate. The polypeptide is Probable protein phosphatase 2C 62 (Arabidopsis thaliana (Mouse-ear cress)).